We begin with the raw amino-acid sequence, 124 residues long: Large ribosomal subunit protein bL12 (124 aa).

This sequence belongs to the bacterial ribosomal protein bL12 family. Homodimer. Part of the ribosomal stalk of the 50S ribosomal subunit. Forms a multimeric L10(L12)X complex, where L10 forms an elongated spine to which 2 to 4 L12 dimers bind in a sequential fashion. Binds GTP-bound translation factors.

Forms part of the ribosomal stalk which helps the ribosome interact with GTP-bound translation factors. Is thus essential for accurate translation. This chain is Large ribosomal subunit protein bL12, found in Nitrosomonas europaea (strain ATCC 19718 / CIP 103999 / KCTC 2705 / NBRC 14298).